We begin with the raw amino-acid sequence, 279 residues long: Ribosomal RNA small subunit methyltransferase J (279 aa).

S-adenosyl-L-methionine contacts are provided by residues 138-139 (ER) and Asp-194.

This sequence belongs to the methyltransferase superfamily. RsmJ family.

Its subcellular location is the cytoplasm. It catalyses the reaction guanosine(1516) in 16S rRNA + S-adenosyl-L-methionine = N(2)-methylguanosine(1516) in 16S rRNA + S-adenosyl-L-homocysteine + H(+). Specifically methylates the guanosine in position 1516 of 16S rRNA. This chain is Ribosomal RNA small subunit methyltransferase J, found in Acinetobacter baumannii (strain ACICU).